Consider the following 122-residue polypeptide: Fluoride-specific ion channel FluC 2 (122 aa).

A run of 4 helical transmembrane segments spans residues 1 to 21 (MAWLYVGCGGIAGTLARFLLS), 33 to 53 (PLGTLFVNLSGAFLLGLLLAL), 62 to 82 (VTLALGTGFVGAYTTFSTFTY), and 102 to 122 (GSILGGLLLAWLGWLAAGSLF). 2 residues coordinate Na(+): Gly72 and Thr75.

Belongs to the fluoride channel Fluc/FEX (TC 1.A.43) family.

The protein resides in the cell membrane. The catalysed reaction is fluoride(in) = fluoride(out). With respect to regulation, na(+) is not transported, but it plays an essential structural role and its presence is essential for fluoride channel function. Functionally, fluoride-specific ion channel. Important for reducing fluoride concentration in the cell, thus reducing its toxicity. The sequence is that of Fluoride-specific ion channel FluC 2 from Moorella thermoacetica (strain ATCC 39073 / JCM 9320).